The chain runs to 977 residues: Phosphatidylinositol 4-kinase PIK1alpha (977 aa).

Residues 1–125 (MSADITETPN…QAVRNLITKI (125 aa)) enclose the PIK helical domain. Residues 205–261 (MSADIPKGSHSDDETATSSSIKPSLSRSASVPRRNTKKTSLSFSSDESEAYTTDDDD) are disordered. The segment covering 220-233 (ATSSSIKPSLSRSA) has biased composition (polar residues). Acidic residues predominate over residues 250-261 (DESEAYTTDDDD). One can recognise a PI3K/PI4K catalytic domain in the interval 679–960 (EDWNTKKQRI…FLIGKSLGSM (282 aa)). A G-loop region spans residues 685 to 691 (KQRIKKS). The tract at residues 826–834 (QIKDRHNGN) is catalytic loop. Positions 845–869 (HIDFGFLLSNSPGSVGFEAAPFKLT) are activation loop.

Belongs to the PI3/PI4-kinase family. Type III PI4K subfamily.

The protein resides in the nucleus. The enzyme catalyses a 1,2-diacyl-sn-glycero-3-phospho-(1D-myo-inositol) + ATP = a 1,2-diacyl-sn-glycero-3-phospho-(1D-myo-inositol 4-phosphate) + ADP + H(+). Functionally, acts on phosphatidylinositol (PI) in the first committed step in the production of the second messenger inositol 1,4,5,-trisphosphate. The protein is Phosphatidylinositol 4-kinase PIK1alpha (PIKALPHA) of Candida albicans (strain SC5314 / ATCC MYA-2876) (Yeast).